Consider the following 527-residue polypeptide: EGF domain-specific O-linked N-acetylglucosamine transferase (527 aa).

The first 19 residues, 1 to 19, serve as a signal peptide directing secretion; it reads MLMLLVFGVLLHEVPLSGQ. The Required for optimal activity motif lies at 295–297; it reads DYD. Residue asparagine 354 is glycosylated (N-linked (GlcNAc...) asparagine). The short motif at 524–527 is the Prevents secretion from ER element; sequence HDEL.

This sequence belongs to the glycosyltransferase 61 family.

The protein resides in the endoplasmic reticulum lumen. The enzyme catalyses L-seryl-[protein] + UDP-N-acetyl-alpha-D-glucosamine = 3-O-(N-acetyl-beta-D-glucosaminyl)-L-seryl-[protein] + UDP + H(+). It catalyses the reaction L-threonyl-[protein] + UDP-N-acetyl-alpha-D-glucosamine = 3-O-(N-acetyl-beta-D-glucosaminyl)-L-threonyl-[protein] + UDP + H(+). Functionally, catalyzes the transfer of a single N-acetylglucosamine from UDP-GlcNAc to a serine or threonine residue in extracellular proteins resulting in their modification with a beta-linked N-acetylglucosamine (O-GlcNAc). Specifically glycosylates the Thr residue located between the fifth and sixth conserved cysteines of folded EGF-like domains. This chain is EGF domain-specific O-linked N-acetylglucosamine transferase (Eogt), found in Rattus norvegicus (Rat).